The chain runs to 367 residues: Leu/Ile/Val-binding protein BraC3 (367 aa).

Positions 1 to 22 (MTLKTLTATLVASLAFAPLAHA) are cleaved as a signal peptide.

This sequence belongs to the leucine-binding protein family. The complex is composed of two ATP-binding proteins (BraF and BraG), two transmembrane proteins (BraD and BraE) and a solute-binding protein (BraC or BraC3).

The protein resides in the periplasm. Part of the ABC transporter complex BraDEFGC/C3 involved in transport of branched-chain amino acids Leu, Ile and Val (LIV). Essential for the development of bacteroids, the differentiated legume-symbiotic forms of this bacterium, and for the effective N(2) fixation by them. This is Leu/Ile/Val-binding protein BraC3 from Rhizobium johnstonii (strain DSM 114642 / LMG 32736 / 3841) (Rhizobium leguminosarum bv. viciae).